Here is a 278-residue protein sequence, read N- to C-terminus: Elongation factor Ts (278 aa).

Positions 80–83 are involved in Mg(2+) ion dislocation from EF-Tu; sequence TDFV.

Belongs to the EF-Ts family.

The protein resides in the cytoplasm. In terms of biological role, associates with the EF-Tu.GDP complex and induces the exchange of GDP to GTP. It remains bound to the aminoacyl-tRNA.EF-Tu.GTP complex up to the GTP hydrolysis stage on the ribosome. In Pseudarthrobacter chlorophenolicus (strain ATCC 700700 / DSM 12829 / CIP 107037 / JCM 12360 / KCTC 9906 / NCIMB 13794 / A6) (Arthrobacter chlorophenolicus), this protein is Elongation factor Ts.